A 130-amino-acid chain; its full sequence is Small ribosomal subunit protein uS9 (130 aa).

This sequence belongs to the universal ribosomal protein uS9 family.

This Hydrogenovibrio crunogenus (strain DSM 25203 / XCL-2) (Thiomicrospira crunogena) protein is Small ribosomal subunit protein uS9.